We begin with the raw amino-acid sequence, 498 residues long: ATP synthase subunit beta, chloroplastic (498 aa).

172–179 (GGAGVGKT) contacts ATP.

The protein belongs to the ATPase alpha/beta chains family. F-type ATPases have 2 components, CF(1) - the catalytic core - and CF(0) - the membrane proton channel. CF(1) has five subunits: alpha(3), beta(3), gamma(1), delta(1), epsilon(1). CF(0) has four main subunits: a(1), b(1), b'(1) and c(9-12).

Its subcellular location is the plastid. The protein localises to the chloroplast thylakoid membrane. The catalysed reaction is ATP + H2O + 4 H(+)(in) = ADP + phosphate + 5 H(+)(out). Its function is as follows. Produces ATP from ADP in the presence of a proton gradient across the membrane. The catalytic sites are hosted primarily by the beta subunits. This Calycanthus floridus (Eastern sweetshrub) protein is ATP synthase subunit beta, chloroplastic.